An 82-amino-acid chain; its full sequence is UPF0291 protein PEPE_0871 (82 aa).

It belongs to the UPF0291 family.

The protein localises to the cytoplasm. In Pediococcus pentosaceus (strain ATCC 25745 / CCUG 21536 / LMG 10740 / 183-1w), this protein is UPF0291 protein PEPE_0871.